A 557-amino-acid polypeptide reads, in one-letter code: Probable serine/threonine-protein kinase WNK7 (557 aa).

The region spanning 28–285 (IRYKEVIGKG…AEELLLDSFL (258 aa)) is the Protein kinase domain. Residues 108–111 (TELF) and K158 each bind ATP. Residue D175 is the Proton acceptor of the active site. A compositionally biased stretch (polar residues) spans 451-477 (QNQSSKDNHQNGASSQAGESISHSLSS). The interval 451–517 (QNQSSKDNHQ…EEEEDERLKE (67 aa)) is disordered. The residue at position 505 (S505) is a Phosphoserine.

The protein belongs to the protein kinase superfamily. Ser/Thr protein kinase family. WNK subfamily.

The enzyme catalyses L-seryl-[protein] + ATP = O-phospho-L-seryl-[protein] + ADP + H(+). It catalyses the reaction L-threonyl-[protein] + ATP = O-phospho-L-threonyl-[protein] + ADP + H(+). Functionally, may regulate flowering time by modulating the photoperiod pathway. This is Probable serine/threonine-protein kinase WNK7 (WNK7) from Arabidopsis thaliana (Mouse-ear cress).